Here is a 403-residue protein sequence, read N- to C-terminus: Phosphoglycerate kinase (403 aa).

Residues Asp21 to Asn23, Arg36, His59 to Arg62, Arg119, and Arg159 each bind substrate. ATP-binding positions include Lys214, Gly301, Glu332, and Gly359–Ser362.

It belongs to the phosphoglycerate kinase family. As to quaternary structure, monomer.

It is found in the cytoplasm. The enzyme catalyses (2R)-3-phosphoglycerate + ATP = (2R)-3-phospho-glyceroyl phosphate + ADP. It functions in the pathway carbohydrate degradation; glycolysis; pyruvate from D-glyceraldehyde 3-phosphate: step 2/5. The polypeptide is Phosphoglycerate kinase (Lactobacillus acidophilus (strain ATCC 700396 / NCK56 / N2 / NCFM)).